We begin with the raw amino-acid sequence, 507 residues long: RNA-splicing ligase RtcB homolog (507 aa).

Aspartate 121, cysteine 124, histidine 229, histidine 261, and histidine 355 together coordinate Mn(2+). 228–232 is a GMP binding site; that stretch reads NHYGE. GMP contacts are provided by residues 355 to 356, 404 to 407, serine 411, 430 to 433, and lysine 506; these read HN, GGTM, and HGSG. The GMP-histidine intermediate role is filled by histidine 430.

This sequence belongs to the RtcB family. As to quaternary structure, catalytic component of the tRNA-splicing ligase complex. The cofactor is Mn(2+).

It carries out the reaction a 3'-end 3'-phospho-ribonucleotide-RNA + a 5'-end dephospho-ribonucleoside-RNA + GTP = a ribonucleotidyl-ribonucleotide-RNA + GMP + diphosphate. It catalyses the reaction a 3'-end 2',3'-cyclophospho-ribonucleotide-RNA + a 5'-end dephospho-ribonucleoside-RNA + GTP + H2O = a ribonucleotidyl-ribonucleotide-RNA + GMP + diphosphate + H(+). In terms of biological role, catalytic subunit of the tRNA-splicing ligase complex that acts by directly joining spliced tRNA halves to mature-sized tRNAs by incorporating the precursor-derived splice junction phosphate into the mature tRNA as a canonical 3',5'-phosphodiester. May act as an RNA ligase with broad substrate specificity, and may function toward other RNAs. The polypeptide is RNA-splicing ligase RtcB homolog (Theileria parva (East coast fever infection agent)).